Here is a 117-residue protein sequence, read N- to C-terminus: Non-specific lipid-transfer protein (117 aa).

Residues 1 to 26 (MASSAFVKFTCALVMCMMVAAPLAEA) form the signal peptide. Disulfide bonds link cysteine 29–cysteine 76, cysteine 39–cysteine 53, cysteine 54–cysteine 99, and cysteine 74–cysteine 113.

The protein belongs to the plant LTP family.

Functionally, plant non-specific lipid-transfer proteins transfer phospholipids as well as galactolipids across membranes. May play a role in wax or cutin deposition in the cell walls of expanding epidermal cells and certain secretory tissues. Also has fungicide activity. The chain is Non-specific lipid-transfer protein (IWF1') from Beta vulgaris (Sugar beet).